Reading from the N-terminus, the 410-residue chain is Arginine deiminase (410 aa).

The active-site Amidino-cysteine intermediate is the cysteine 400.

It belongs to the arginine deiminase family.

It is found in the cytoplasm. The enzyme catalyses L-arginine + H2O = L-citrulline + NH4(+). The protein operates within amino-acid degradation; L-arginine degradation via ADI pathway; carbamoyl phosphate from L-arginine: step 1/2. In Levilactobacillus brevis (strain ATCC 367 / BCRC 12310 / CIP 105137 / JCM 1170 / LMG 11437 / NCIMB 947 / NCTC 947) (Lactobacillus brevis), this protein is Arginine deiminase.